A 130-amino-acid chain; its full sequence is MASVDVSQNTSDIHFSVSAADKVAELIKEEDNSNLNLRVSITGGGCSGFQYGFSFDEQINDDDTIIIQQCSDGKSSVKLLIDSMSYQYLHDAEIDYIKGIQGEQFVIRNPNAKTTCGCGSSFSIGDEDVL.

3 residues coordinate iron-sulfur cluster: cysteine 46, cysteine 116, and cysteine 118.

It belongs to the HesB/IscA family. In terms of assembly, homodimer. Requires iron-sulfur cluster as cofactor.

In terms of biological role, required for insertion of 4Fe-4S clusters for at least IspG. This is Iron-sulfur cluster insertion protein ErpA from Legionella pneumophila (strain Paris).